Reading from the N-terminus, the 296-residue chain is Homoserine kinase (296 aa).

Position 86–96 (86–96 (KAGSGLGSSAA)) interacts with ATP.

This sequence belongs to the GHMP kinase family. Homoserine kinase subfamily.

It localises to the cytoplasm. It carries out the reaction L-homoserine + ATP = O-phospho-L-homoserine + ADP + H(+). It functions in the pathway amino-acid biosynthesis; L-threonine biosynthesis; L-threonine from L-aspartate: step 4/5. Its function is as follows. Catalyzes the ATP-dependent phosphorylation of L-homoserine to L-homoserine phosphate. This Methanocaldococcus jannaschii (strain ATCC 43067 / DSM 2661 / JAL-1 / JCM 10045 / NBRC 100440) (Methanococcus jannaschii) protein is Homoserine kinase (thrB).